The sequence spans 207 residues: 23 kDa calcium-binding protein (207 aa).

Position 1 is a blocked amino end (Met) (Met-1). 4 EF-hand domains span residues 17-52 (AKLDVARKLFAQFDSNKNGTLDPSEVAGLIKTTFEN), 60-95 (VTADDVKLYMKSVDVDNNGLVSYSEYEEYVIACLKK), 119-154 (MKLDVARRLFAKYDSDKSGQLEEKEVYGVITETYKQ), and 161-196 (PTEADVKLWMSMTDTDKNGTVSIVEYEDFVISGLKK). Ca(2+)-binding residues include Asp-30, Asn-32, Asn-34, Thr-36, Glu-41, Asp-73, Asp-75, Asn-77, Glu-84, Asp-132, Asp-134, Ser-136, Gln-138, Glu-143, Asp-174, Asp-176, Asn-178, Thr-180, and Glu-185.

In terms of biological role, expected to play a crucial role in calcium-dependent regulation of ciliary movement. The protein is 23 kDa calcium-binding protein of Tetrahymena thermophila.